The sequence spans 271 residues: Mannosyl-3-phosphoglycerate phosphatase (271 aa).

Aspartate 13 serves as the catalytic Nucleophile. 3 residues coordinate Mg(2+): aspartate 13, aspartate 15, and aspartate 214.

The protein belongs to the HAD-like hydrolase superfamily. MPGP family. Requires Mg(2+) as cofactor.

Its subcellular location is the cytoplasm. It carries out the reaction 2-O-(alpha-D-mannosyl)-3-phosphoglycerate + H2O = (2R)-2-O-(alpha-D-mannosyl)-glycerate + phosphate. The chain is Mannosyl-3-phosphoglycerate phosphatase (yedP) from Escherichia coli O6:H1 (strain CFT073 / ATCC 700928 / UPEC).